A 213-amino-acid polypeptide reads, in one-letter code: Chloramphenicol acetyltransferase 2 (213 aa).

His189 serves as the catalytic Proton acceptor.

This sequence belongs to the chloramphenicol acetyltransferase family. In terms of assembly, homotrimer.

The enzyme catalyses chloramphenicol + acetyl-CoA = chloramphenicol 3-acetate + CoA. Functionally, this enzyme is an effector of chloramphenicol resistance in bacteria. The polypeptide is Chloramphenicol acetyltransferase 2 (cat-IIH) (Haemophilus influenzae).